A 155-amino-acid chain; its full sequence is MLP-like protein 423 (155 aa).

Belongs to the MLP family.

The sequence is that of MLP-like protein 423 (MLP423) from Arabidopsis thaliana (Mouse-ear cress).